A 559-amino-acid polypeptide reads, in one-letter code: Glypican-1 (559 aa).

The N-terminal stretch at 1–23 (MELRARGWWLLYAAAVLVACARG) is a signal peptide. Cystine bridges form between cysteine 32–cysteine 68, cysteine 62–cysteine 256, cysteine 69–cysteine 259, cysteine 191–cysteine 343, cysteine 246–cysteine 279, cysteine 268–cysteine 415, and cysteine 272–cysteine 401. N-linked (GlcNAc...) asparagine glycans are attached at residues asparagine 79 and asparagine 116. The disordered stretch occupies residues 478–539 (FQDASDDGSG…SAAAPTPPQA (62 aa)). O-linked (Xyl...) (heparan sulfate) serine glycosylation is found at serine 486, serine 488, and serine 490. Serine 530 carries GPI-anchor amidated serine lipidation. Positions 531 to 559 (AAAPTPPQASPLLLLGLALALPAVAPRGR) are cleaved as a propeptide — removed in mature form.

Belongs to the glypican family. In terms of processing, S-nitrosylated in a Cu(2+)-dependent manner. Nitric acid (NO) is released from the nitrosylated cysteines by ascorbate or by some other reducing agent, in a Cu(2+) or Zn(2+) dependent manner. This free nitric oxide is then capable of cleaving the heparan sulfate side chains. N- and O-glycosylated. N-glycosylation is mainly of the complex type containing sialic acid. O-glycosylated with heparan sulfate. The heparan sulfate chains can be cleaved either by the action of heparanase or, degraded by a deaminative process that uses nitric oxide (NO) released from the S-nitrosylated cysteines. This process is triggered by ascorbate, or by some other reducing agent, in a Cu(2+)- or Zn(2+) dependent manner. Cu(2+) ions are provided by ceruloproteins such as APP, PRNP or CP which associate with GCP1 in intracellular compartments or lipid rafts. Post-translationally, shed from the cell surface probably by further cleavage.

The protein resides in the cell membrane. It localises to the endosome. The protein localises to the secreted. Its subcellular location is the extracellular space. In terms of biological role, cell surface proteoglycan that bears heparan sulfate. Binds, via the heparan sulfate side chains, alpha-4 (V) collagen and participates in Schwann cell myelination. May act as a catalyst in increasing the rate of conversion of prion protein PRPN (C) to PRNP (Sc) via associating (via the heparan sulfate side chains) with both forms of PRPN, targeting them to lipid rafts and facilitating their interaction. Required for proper skeletal muscle differentiation by sequestering FGF2 in lipid rafts preventing its binding to receptors (FGFRs) and inhibiting the FGF-mediated signaling. The sequence is that of Glypican-1 (GPC1) from Bos taurus (Bovine).